Consider the following 592-residue polypeptide: Coronatine-insensitive protein 1 (592 aa).

Residues 16-57 form the F-box domain; the sequence is TVDDVIEQVMTYITDPKDRDSASLVCRRWFKIDSETREHVTM. LRR repeat units follow at residues 58 to 82, 83 to 102, 103 to 120, 121 to 154, 155 to 182, 183 to 210, 211 to 236, 237 to 264, 265 to 283, 284 to 308, 309 to 332, 333 to 368, 369 to 393, 394 to 426, 427 to 456, 457 to 478, 479 to 500, and 501 to 524; these read ALCY…KLKG, KPRA…YVTP, WVTE…VHFR, RMIV…FTTD, GLLS…KDGK, WLHE…ISPK, DLET…LELV, GFFK…EKYM, NLVF…MGPN, EMPI…LETE, DHCT…IGDR, GLEV…VSQR, GLIA…ITNE, SLES…PLDN, GVRS…LGLS, YIGQ…ESDE, GLME…GCCF, and SERA…QGYR. Arg85 serves as a coordination point for jasmonate. Positions 348, 386, and 409 each coordinate jasmonate. Arg496 contacts jasmonate.

As to quaternary structure, component of SCF(COI1) E3 ubiquitin ligase complexes at least composed of ASK1 or ASK2, CUL1, RBX1A or RBX1B and COI1. Interacts with ASK1 and ASK2, but separately. Also binds to ASK11 and ASK12. Interacts with RBCS-1B and HDA6. SCF complexes interact with the COP9 signalosome (CSN). Interacts with TIFY10A.

It functions in the pathway protein modification; protein ubiquitination. Its function is as follows. Required for jasmonate-regulated plant fertility and defense processes, and for coronatine and/or other elicitors perceptions/responses. Seems to not be required for meiosis. Required for the regulation of some genes induced by wounding, but not for all. Component of SCF(COI1) E3 ubiquitin ligase complexes, which may mediate the ubiquitination and subsequent proteasomal degradation of target proteins (probably including the ribulose bisphosphate carboxylase small chain 1B RBCS-1B and the histone deacetylase HDA6). These SCF complexes play crucial roles in regulating response to jasmonate, and their interactions with the COP9 signalosome (CSN) appear to be important for their activity. Interacts with TIFY10A and inositol pentakisphosphate to form a high-affinity jasmonates coreceptor. Involved in the regulation of plant gene expression during plant-pathogen interactions with Pseudomonas syringae and Alternaria brassicicola. This chain is Coronatine-insensitive protein 1 (COI1), found in Arabidopsis thaliana (Mouse-ear cress).